The sequence spans 196 residues: 7-methyl-GTP pyrophosphatase (196 aa).

The active-site Proton acceptor is Asp72.

The protein belongs to the Maf family. YceF subfamily. A divalent metal cation serves as cofactor.

The protein localises to the cytoplasm. It carries out the reaction N(7)-methyl-GTP + H2O = N(7)-methyl-GMP + diphosphate + H(+). In terms of biological role, nucleoside triphosphate pyrophosphatase that hydrolyzes 7-methyl-GTP (m(7)GTP). May have a dual role in cell division arrest and in preventing the incorporation of modified nucleotides into cellular nucleic acids. This chain is 7-methyl-GTP pyrophosphatase, found in Neisseria gonorrhoeae (strain ATCC 700825 / FA 1090).